Consider the following 436-residue polypeptide: Gamma-glutamyl phosphate reductase (436 aa).

Belongs to the gamma-glutamyl phosphate reductase family.

Its subcellular location is the cytoplasm. The catalysed reaction is L-glutamate 5-semialdehyde + phosphate + NADP(+) = L-glutamyl 5-phosphate + NADPH + H(+). The protein operates within amino-acid biosynthesis; L-proline biosynthesis; L-glutamate 5-semialdehyde from L-glutamate: step 2/2. Catalyzes the NADPH-dependent reduction of L-glutamate 5-phosphate into L-glutamate 5-semialdehyde and phosphate. The product spontaneously undergoes cyclization to form 1-pyrroline-5-carboxylate. The sequence is that of Gamma-glutamyl phosphate reductase from Prochlorococcus marinus (strain AS9601).